A 543-amino-acid chain; its full sequence is Sodium/glucose cotransporter (543 aa).

Helical transmembrane passes span 10–30, 45–65, 79–99, 129–149, 156–176, 193–213, 246–266, 287–307, 345–365, 401–421, 427–447, 455–475, 483–503, and 523–543; these read FIDI…GLWV, FLAG…AANI, SIGL…IIVG, ILAV…VLYL, TILG…ALVY, VFFL…FIGG, LPGI…YWGF, IVFA…PGIA, FLPV…IVSS, TAAV…GGIG, IQEY…LGLF, GAII…FMPL, MLYT…STSI, and SFNI…TLFW.

It is found in the cell membrane. Actively transports glucose into cells by Na(+) cotransport. The sequence is that of Sodium/glucose cotransporter (sglT) from Vibrio parahaemolyticus.